We begin with the raw amino-acid sequence, 850 residues long: Protein STB2 (850 aa).

A phosphoserine mark is found at S594 and S625.

This sequence to yeast STB6. As to quaternary structure, interacts with SIN3.

This Saccharomyces cerevisiae (strain ATCC 204508 / S288c) (Baker's yeast) protein is Protein STB2 (STB2).